The sequence spans 36 residues: Cytochrome b6-f complex subunit 5 (36 aa).

Residues L5 to A25 traverse the membrane as a helical segment.

The protein belongs to the PetG family. In terms of assembly, the 4 large subunits of the cytochrome b6-f complex are cytochrome b6, subunit IV (17 kDa polypeptide, PetD), cytochrome f and the Rieske protein, while the 4 small subunits are PetG, PetL, PetM and PetN. The complex functions as a dimer.

Its subcellular location is the plastid. It localises to the chloroplast thylakoid membrane. Its function is as follows. Component of the cytochrome b6-f complex, which mediates electron transfer between photosystem II (PSII) and photosystem I (PSI), cyclic electron flow around PSI, and state transitions. PetG is required for either the stability or assembly of the cytochrome b6-f complex. The chain is Cytochrome b6-f complex subunit 5 from Cyanidioschyzon merolae (strain NIES-3377 / 10D) (Unicellular red alga).